The following is a 222-amino-acid chain: UPF0502 protein SO_1867 (222 aa).

The span at 169–193 (EQVSATSLSADSPSADSNSLNAQDR) shows a compositional bias: polar residues. A disordered region spans residues 169 to 195 (EQVSATSLSADSPSADSNSLNAQDRQQ).

It belongs to the UPF0502 family.

The polypeptide is UPF0502 protein SO_1867 (Shewanella oneidensis (strain ATCC 700550 / JCM 31522 / CIP 106686 / LMG 19005 / NCIMB 14063 / MR-1)).